The sequence spans 121 residues: Small ribosomal subunit protein uS13 (121 aa).

Residues arginine 92–lysine 121 form a disordered region.

Belongs to the universal ribosomal protein uS13 family. In terms of assembly, part of the 30S ribosomal subunit. Forms a loose heterodimer with protein S19. Forms two bridges to the 50S subunit in the 70S ribosome.

In terms of biological role, located at the top of the head of the 30S subunit, it contacts several helices of the 16S rRNA. In the 70S ribosome it contacts the 23S rRNA (bridge B1a) and protein L5 of the 50S subunit (bridge B1b), connecting the 2 subunits; these bridges are implicated in subunit movement. Contacts the tRNAs in the A and P-sites. The chain is Small ribosomal subunit protein uS13 from Burkholderia cenocepacia (strain ATCC BAA-245 / DSM 16553 / LMG 16656 / NCTC 13227 / J2315 / CF5610) (Burkholderia cepacia (strain J2315)).